The sequence spans 147 residues: Large ribosomal subunit protein uL15 (147 aa).

A compositionally biased stretch (polar residues) spans 1–10; the sequence is MYLNTLSPNS. A disordered region spans residues 1–48; it reads MYLNTLSPNSKSHKKSKRVGRGIGSGFGKTSGRGHKGQKSRSGCKIRR. Residues 11 to 20 show a composition bias toward basic residues; the sequence is KSHKKSKRVG. Gly residues predominate over residues 21–31; that stretch reads RGIGSGFGKTS. The span at 32-47 shows a compositional bias: basic residues; it reads GRGHKGQKSRSGCKIR.

This sequence belongs to the universal ribosomal protein uL15 family. In terms of assembly, part of the 50S ribosomal subunit.

Functionally, binds to the 23S rRNA. The polypeptide is Large ribosomal subunit protein uL15 (Buchnera aphidicola subsp. Baizongia pistaciae (strain Bp)).